Here is a 243-residue protein sequence, read N- to C-terminus: Segregation and condensation protein A (243 aa).

The protein belongs to the ScpA family. Component of a cohesin-like complex composed of ScpA, ScpB and the Smc homodimer, in which ScpA and ScpB bind to the head domain of Smc. The presence of the three proteins is required for the association of the complex with DNA.

Its subcellular location is the cytoplasm. Participates in chromosomal partition during cell division. May act via the formation of a condensin-like complex containing Smc and ScpB that pull DNA away from mid-cell into both cell halves. In Halothermothrix orenii (strain H 168 / OCM 544 / DSM 9562), this protein is Segregation and condensation protein A.